Consider the following 195-residue polypeptide: Interferon omega-1 (195 aa).

Positions 1–23 (MAFVLSLLMALVLVSYGPGGSLG) are cleaved as a signal peptide. 2 disulfides stabilise this stretch: Cys24/Cys122 and Cys52/Cys162.

The protein belongs to the alpha/beta interferon family.

Its subcellular location is the secreted. This is Interferon omega-1 (IFNW1) from Bos taurus (Bovine).